Reading from the N-terminus, the 641-residue chain is SUMO-activating enzyme subunit 2 (641 aa).

Residues glycine 24–glycine 29, aspartate 48, asparagine 56–arginine 59, lysine 72, serine 95–isoleucine 96, and aspartate 117–arginine 122 each bind ATP. Cysteine 158 and cysteine 161 together coordinate Zn(2+). The active-site Glycyl thioester intermediate is the cysteine 173. Residue lysine 190 forms a Glycyl lysine isopeptide (Lys-Gly) (interchain with G-Cter in SUMO) linkage. A Glycyl lysine isopeptide (Lys-Gly) (interchain with G-Cter in SUMO1) cross-link involves residue lysine 236. Glycyl lysine isopeptide (Lys-Gly) (interchain with G-Cter in SUMO) cross-links involve residues lysine 257 and lysine 275. 2 residues coordinate Zn(2+): cysteine 439 and cysteine 442. Residues glycine 546 to aspartate 641 form a disordered region. Over residues proline 556 to alanine 579 the composition is skewed to polar residues. The segment covering glutamine 582–serine 594 has biased composition (acidic residues). Residues lysine 610, lysine 612, and lysine 623 each participate in a glycyl lysine isopeptide (Lys-Gly) (interchain with G-Cter in SUMO) cross-link. Acidic residues predominate over residues proline 630–aspartate 641.

The protein belongs to the ubiquitin-activating E1 family. As to quaternary structure, heterodimer of sae1 and uba2/sae2. The heterodimer corresponds to the two domains that are encoded on a single polypeptide chain in ubiquitin-activating enzyme E1. Interacts with ube2i. In terms of processing, sumoylated with SUMO1 and SUMO2/3 and by UBC9. Sumoylation at Lys-236 inhibits enzymatic activity. Sumoylation at the C-terminal lysine cluster plays an essential role in nuclear trafficking.

Its subcellular location is the cytoplasm. The protein resides in the nucleus. It participates in protein modification; protein sumoylation. Its function is as follows. The heterodimer acts as an E1 ligase for sumo1, sumo2, and sumo3. It mediates ATP-dependent activation of sumo proteins followed by formation of a thioester bond between a sumo protein and a conserved active site cysteine residue on uba2/sae2. This is SUMO-activating enzyme subunit 2 (uba2) from Xenopus tropicalis (Western clawed frog).